Consider the following 274-residue polypeptide: Pantothenate synthetase (274 aa).

27-34 (MGALHKGH) is an ATP binding site. The Proton donor role is filled by His34. Gln58 is a (R)-pantoate binding site. Gln58 serves as a coordination point for beta-alanine. 145–148 (GQKD) is a binding site for ATP. A (R)-pantoate-binding site is contributed by Gln151. 182–185 (LSSR) serves as a coordination point for ATP.

This sequence belongs to the pantothenate synthetase family. Homodimer.

The protein resides in the cytoplasm. It catalyses the reaction (R)-pantoate + beta-alanine + ATP = (R)-pantothenate + AMP + diphosphate + H(+). It participates in cofactor biosynthesis; (R)-pantothenate biosynthesis; (R)-pantothenate from (R)-pantoate and beta-alanine: step 1/1. Its function is as follows. Catalyzes the condensation of pantoate with beta-alanine in an ATP-dependent reaction via a pantoyl-adenylate intermediate. This Wolinella succinogenes (strain ATCC 29543 / DSM 1740 / CCUG 13145 / JCM 31913 / LMG 7466 / NCTC 11488 / FDC 602W) (Vibrio succinogenes) protein is Pantothenate synthetase.